The chain runs to 624 residues: Probable potassium transport system protein Kup (624 aa).

The next 12 helical transmembrane spans lie at Leu-13–Met-33, Ile-52–Ile-72, Trp-102–Thr-122, Pro-139–Ile-159, Leu-170–Ile-190, Phe-208–Thr-228, Trp-249–Leu-269, Met-291–Phe-311, Ile-339–Phe-359, Ala-368–Met-388, Thr-399–Val-419, and Ile-421–Thr-441.

This sequence belongs to the HAK/KUP transporter (TC 2.A.72) family.

Its subcellular location is the cell inner membrane. It catalyses the reaction K(+)(in) + H(+)(in) = K(+)(out) + H(+)(out). In terms of biological role, transport of potassium into the cell. Likely operates as a K(+):H(+) symporter. This Thiobacillus denitrificans (strain ATCC 25259 / T1) protein is Probable potassium transport system protein Kup.